Consider the following 201-residue polypeptide: Probable molybdenum cofactor guanylyltransferase (201 aa).

Residues 6–8, Lys18, Asp65, and Asp97 contribute to the GTP site; that span reads LAG. Asp97 contacts Mg(2+).

Belongs to the MobA family. Mg(2+) is required as a cofactor.

The protein resides in the cytoplasm. The enzyme catalyses Mo-molybdopterin + GTP + H(+) = Mo-molybdopterin guanine dinucleotide + diphosphate. Its function is as follows. Transfers a GMP moiety from GTP to Mo-molybdopterin (Mo-MPT) cofactor (Moco or molybdenum cofactor) to form Mo-molybdopterin guanine dinucleotide (Mo-MGD) cofactor. This Staphylococcus haemolyticus (strain JCSC1435) protein is Probable molybdenum cofactor guanylyltransferase.